An 862-amino-acid chain; its full sequence is MAQYTPMIQQYLAIKKDYPDTFLFFRLGDFYELFFDDAILASRELEITLTGRDGGGSERIPMCGVPHHAADGYIAELLKKGHKVAVCEQVEDPKEAKGVVRREVTRVITPGTMMEGKWLTDKENNYMAALAQVEGRTGVAACDMSTGEMYVTSLAGQAESVLDEALQYRPKELVFFGLAALPKTALPSTVVDAHQLDVFAVDSQYAEQAKGLDVSMRAAVNALLFYIGTTQKRSLAHMRLLKQYDAKQYLQMDGFSRRNLELTETIRDKTKKGSLLWLLDRTQTAMGGRLLRRWIERPLLSRDQLEARLSAVEALKGDMLLRSDLRTCLDRVYDLERLAGRISYGNANARDLIQLRMSLEAVPELKQYMIQTNTPVLMELANGMDECADIVNYLAHALVDDPPISVREGGMIRTGYDEYLDKLHTASREGKTWIAQLEQGEREATGIRSLKVGFNKVFGYYIEISKSNIANVPAGRYERKQTLANAERYITPELKEREALILEAEEKMIELEYQLFVAVRSEVAKHIPRLQNLAERIASVDVLQAFATVSDERGFVRPELVESGDYVITEGRHPVVEAVLEREKYVANDVEMDQTNRQVLLITGPNMAGKSTYMRQIALITVMAQIGCFVPAKQAKLSIVDQIFTRIGAADDLVGGHSTFMVEMLETRHALQKATAKSLILLDEIGRGTSTYDGMALAQAVIEYICQKIGAKTLFSTHYHELTGLAETLSGVVNVNARCEEREGKLLFLHKIEEGRADKSYGIHVAELAEMPTWVIERARSILTGLEANGSTGNGNAASDVQMSLETLWTAPVAAVREEPMQFASAEEEAIMAELRELDLNSTTPMDAMMKLYAWKQQLKKR.

604 to 611 is a binding site for ATP; it reads GPNMAGKS.

It belongs to the DNA mismatch repair MutS family.

This protein is involved in the repair of mismatches in DNA. It is possible that it carries out the mismatch recognition step. This protein has a weak ATPase activity. In Brevibacillus brevis (strain 47 / JCM 6285 / NBRC 100599), this protein is DNA mismatch repair protein MutS.